The chain runs to 393 residues: E3 ubiquitin-protein transferase RMND5B (393 aa).

Met1 is modified (N-acetylmethionine). The LisH domain maps to 116 to 148 (QQQILQMAIVEHLYQQGMLSVAEELCQESTLNV). The CTLH domain maps to 155-212 (PFLELNRILEALHEQDLGPALEWAVSHRQRLLELNSSLEFKLHRLHFIRLLAGGPEKQ). The segment at 338-379 (CPILRQQTSDSNPPIKLICGHVISRDALNKLINGGKLKCPYC) adopts an RING-Gid-type zinc-finger fold.

Identified in the CTLH complex that contains GID4, RANBP9 and/or RANBP10, MKLN1, MAEA, RMND5A (or alternatively its paralog RMND5B), GID8, ARMC8, WDR26 and YPEL5. Within this complex, MAEA, RMND5A (or alternatively its paralog RMND5B), GID8, WDR26, and RANBP9 and/or RANBP10 form the catalytic core, while GID4, MKLN1, ARMC8 and YPEL5 have ancillary roles.

Its subcellular location is the cytoplasm. The protein resides in the cytosol. It catalyses the reaction S-ubiquitinyl-[E2 ubiquitin-conjugating enzyme]-L-cysteine + [acceptor protein]-L-lysine = [E2 ubiquitin-conjugating enzyme]-L-cysteine + N(6)-ubiquitinyl-[acceptor protein]-L-lysine.. Core component of the CTLH E3 ubiquitin-protein ligase complex that selectively accepts ubiquitin from UBE2H and mediates ubiquitination and subsequent proteasomal degradation of the transcription factor HBP1. MAEA and RMND5A are both required for catalytic activity of the CTLH E3 ubiquitin-protein ligase complex. Catalytic activity of the complex is required for normal cell proliferation. The CTLH E3 ubiquitin-protein ligase complex is not required for the degradation of enzymes involved in gluconeogenesis, such as FBP1. This Mus musculus (Mouse) protein is E3 ubiquitin-protein transferase RMND5B (Rmnd5b).